The primary structure comprises 87 residues: Phosphoribosyl-ATP pyrophosphatase (87 aa).

Belongs to the PRA-PH family.

The protein localises to the cytoplasm. The enzyme catalyses 1-(5-phospho-beta-D-ribosyl)-ATP + H2O = 1-(5-phospho-beta-D-ribosyl)-5'-AMP + diphosphate + H(+). The protein operates within amino-acid biosynthesis; L-histidine biosynthesis; L-histidine from 5-phospho-alpha-D-ribose 1-diphosphate: step 2/9. The sequence is that of Phosphoribosyl-ATP pyrophosphatase from Saccharopolyspora erythraea (strain ATCC 11635 / DSM 40517 / JCM 4748 / NBRC 13426 / NCIMB 8594 / NRRL 2338).